The following is a 410-amino-acid chain: MECNLGTEHPSTDTWNRSKTEQAVVDAFDESLFGDVASDIGFETSLYSHAVKTAPSPPWVASPKILYQQLIRDLDFSEGPRLLSCLETWNEDLFSCFPINEDLYSDMMVLSPDPDDVISTVSTKDHVEMFNLTTRGSVRLPSPPKQPTGLPAYVQEVQDSFTVELRAREEAYTKLLVTYCKSIIRYLQGTAKRTTIGLNIQNPDQKAYTQLRQSILLRYYREVASLARLLYLHLYLTVTREFSWRLYASQSAHPDVFAALKFTWTERRQFTCAFHPVLCNHGIVLLEGKPLTASALREINYRRRELGLPLVRCGLVEENKSPLVQQPSFSVHLPRSVGFLTHHIKRKLDAYAVKHPQEPRHVRADHPYAKVVENRNYGSSIEAMILAPPSPSEILPGDPPRPPTCGFLTR.

A disordered region spans residues 388–410 (PPSPSEILPGDPPRPPTCGFLTR).

This sequence belongs to the herpesviridae tegument protein VP16 protein family. Associates with the VP16-induced complex; binding to host HCFC1 activates VP16 for association with the octamer motif-binding host protein POU2F1, to form a multiprotein-DNA complex responsible for activating transcription of the viral immediate early genes.

It localises to the virion tegument. Its subcellular location is the host nucleus. Its function is as follows. Transcriptional activator of immediate-early (IE) gene products (alpha genes). Acts as a key activator of lytic infection by initiating the lytic program through the assembly of the transcriptional regulatory VP16-induced complex composed of VP16 and two cellular factors, HCFC1 and POU2F1. VP16-induced complex represents a regulatory switch: when it is on, it promotes IE-gene expression and thus lytic infection, and when it is off, it limits IE-gene transcription favoring latent infection. May play a role in the aggregation of tegument proteins around nucleocapsids during virus morphogenesis. This is Tegument protein VP16 homolog from Varicella-zoster virus (strain Dumas) (HHV-3).